Reading from the N-terminus, the 81-residue chain is Styelin-E (81 aa).

The N-terminal stretch at M1–A22 is a signal peptide. The residue at position 24 (W24) is a 6'-bromotryptophan. R26 carries the 3,4-dihydroxyarginine modification. 4,5-dihydroxylysine is present on residues K27, K30, and K34. 3',4'-dihydroxyphenylalanine is present on residues Y36 and Y37. At K38 the chain carries 4,5-dihydroxylysine. K40 is modified (5-hydroxylysine). Y41 and Y42 each carry 3',4'-dihydroxyphenylalanine. A 5-hydroxylysine modification is found at K44. L54 is modified (leucine amide). A propeptide spans D56–Q81 (removed in mature form).

Contains L-DOPA (3',4'-dihydroxyphenylalanine). Hemocytes and pharyngeal tissues.

Its subcellular location is the secreted. Functionally, bactericidal against several Gram-positive and Gram-negative bacteria. In Styela clava (Sea squirt), this protein is Styelin-E.